Reading from the N-terminus, the 184-residue chain is NADH-quinone oxidoreductase subunit B (184 aa).

[4Fe-4S] cluster-binding residues include cysteine 37, cysteine 38, cysteine 103, and cysteine 132.

The protein belongs to the complex I 20 kDa subunit family. NDH-1 is composed of 14 different subunits. Subunits NuoB, C, D, E, F, and G constitute the peripheral sector of the complex. The cofactor is [4Fe-4S] cluster.

It localises to the cell membrane. The enzyme catalyses a quinone + NADH + 5 H(+)(in) = a quinol + NAD(+) + 4 H(+)(out). In terms of biological role, NDH-1 shuttles electrons from NADH, via FMN and iron-sulfur (Fe-S) centers, to quinones in the respiratory chain. The immediate electron acceptor for the enzyme in this species is believed to be a menaquinone. Couples the redox reaction to proton translocation (for every two electrons transferred, four hydrogen ions are translocated across the cytoplasmic membrane), and thus conserves the redox energy in a proton gradient. The protein is NADH-quinone oxidoreductase subunit B of Mycolicibacterium vanbaalenii (strain DSM 7251 / JCM 13017 / BCRC 16820 / KCTC 9966 / NRRL B-24157 / PYR-1) (Mycobacterium vanbaalenii).